Reading from the N-terminus, the 238-residue chain is Uridylate kinase (238 aa).

12 to 15 (KLSG) contacts ATP. Gly-54 contacts UMP. Residues Gly-55 and Arg-59 each contribute to the ATP site. UMP is bound by residues Asp-74 and 135–142 (TGNPYFST). ATP-binding residues include Tyr-168 and Asp-171.

This sequence belongs to the UMP kinase family. Homohexamer.

The protein localises to the cytoplasm. It carries out the reaction UMP + ATP = UDP + ADP. The protein operates within pyrimidine metabolism; CTP biosynthesis via de novo pathway; UDP from UMP (UMPK route): step 1/1. With respect to regulation, inhibited by UTP. Functionally, catalyzes the reversible phosphorylation of UMP to UDP. The protein is Uridylate kinase of Syntrophomonas wolfei subsp. wolfei (strain DSM 2245B / Goettingen).